The sequence spans 320 residues: Metapyrocatechase 2 (320 aa).

Disordered stretches follow at residues 1–21 (MDTHRADASQRSQAPAARPRH) and 131–153 (GPKTSPSSKSPARLEGAPGGQRG). 2 VOC domains span residues 25–131 (SIDH…VKIG) and 167–282 (RLSH…YSAD). Positions 170, 227, and 278 each coordinate Fe cation.

The protein belongs to the extradiol ring-cleavage dioxygenase family. Requires Fe(2+) as cofactor.

It carries out the reaction catechol + O2 = (2Z,4E)-2-hydroxy-6-oxohexa-2,4-dienoate + H(+). The sequence is that of Metapyrocatechase 2 (mcpII) from Cupriavidus necator (Alcaligenes eutrophus).